Here is a 312-residue protein sequence, read N- to C-terminus: DNA-directed RNA polymerase subunit alpha (312 aa).

Residues 1–229 form an alpha N-terminal domain (alpha-NTD) region; sequence MLQYQIDRIE…ELFQPLATVT (229 aa). Residues 246–312 form an alpha C-terminal domain (alpha-CTD) region; sequence IPLEELNLSV…ISIPQSRTSA (67 aa).

It belongs to the RNA polymerase alpha chain family. In terms of assembly, in cyanobacteria the RNAP catalytic core is composed of 2 alpha, 1 beta, 1 beta', 1 gamma and 1 omega subunit. When a sigma factor is associated with the core the holoenzyme is formed, which can initiate transcription.

The enzyme catalyses RNA(n) + a ribonucleoside 5'-triphosphate = RNA(n+1) + diphosphate. Functionally, DNA-dependent RNA polymerase catalyzes the transcription of DNA into RNA using the four ribonucleoside triphosphates as substrates. The polypeptide is DNA-directed RNA polymerase subunit alpha (Prochlorococcus marinus (strain SARG / CCMP1375 / SS120)).